A 319-amino-acid chain; its full sequence is Thioredoxin reductase (319 aa).

37-44 (ERGVPGGQ) lines the FAD pocket. Cys136 and Cys139 are joined by a disulfide. Position 279-288 (279-288 (DVRAKSLRQI)) interacts with FAD.

The protein belongs to the class-II pyridine nucleotide-disulfide oxidoreductase family. In terms of assembly, homodimer. It depends on FAD as a cofactor.

The protein resides in the cytoplasm. The catalysed reaction is [thioredoxin]-dithiol + NADP(+) = [thioredoxin]-disulfide + NADPH + H(+). The protein is Thioredoxin reductase (trxB) of Listeria innocua serovar 6a (strain ATCC BAA-680 / CLIP 11262).